Consider the following 2193-residue polypeptide: Highly reducing polyketide synthase VdtX (2193 aa).

Positions 1–417 (MAICGIAVRL…GVNAHVIIES (417 aa)) constitute a Ketosynthase family 3 (KS3) domain. Residues Cys170, His306, and His340 each act as for beta-ketoacyl synthase activity in the active site. Positions 513–809 (VFAGQGAQWP…HPYVPCLIRF (297 aa)) are malonyl-CoA:ACP transacylase (MAT) domain. An N-terminal hotdog fold region spans residues 877-1001 (HELLGTRVVD…GEVAQENLSR (125 aa)). The dehydratase (DH) domain stretch occupies residues 877–1128 (HELLGTRVVD…DIVLRPLGAN (252 aa)). The 326-residue stretch at 877–1202 (HELLGTRVVD…LQRQPKPSSE (326 aa)) folds into the PKS/mFAS DH domain. His909 serves as the catalytic Proton acceptor; for dehydratase activity. Positions 1032 to 1202 (SVTSNTVSGR…LQRQPKPSSE (171 aa)) are C-terminal hotdog fold. Asp1093 functions as the Proton donor; for dehydratase activity in the catalytic mechanism. Residues 1256–1390 (NYLNEPQQRI…DRWDSILKAA (135 aa)) are methyltransferase (CMet) domain. The segment at 1575 to 1783 (GQQVQLLGDD…SGQHIGQLRL (209 aa)) is enoyl reductase (ER) domain. The interval 1807–1981 (ASYLLVGGLG…ASVIDIGEVQ (175 aa)) is ketoreductase (KR) domain. In terms of domain architecture, Carrier spans 2102 to 2183 (PSATQFVSLE…AMGEHVIREL (82 aa)). Position 2143 is an O-(pantetheine 4'-phosphoryl)serine (Ser2143).

Highly reducing polyketide synthase; part of the gene cluster that mediates the biosynthesis of viriditoxin, one of the 'classical' secondary metabolites produced by fungi and that has antibacterial activity. The first step is performed by the polyketide synthase VdtA which condenses one acetyl-CoA and 6 malonyl-CoA units to form the heptaketide monomer backbone of viriditoxin. The product of VdtA is then O-methylated on C7 by the O-methyltransferase VdtC. The O-methyl group is important for the stereoselective coupling of the monomers at the final step of viriditoxin biosynthesis. The short-chain dehydrogenase/reductase VdtF is involved in the reduction of the C3-C4 double bond. The FAD-binding monooxygenase VdtE then converts the ketone group into a methyl-ester group to yield semi-viriditoxin. Finally, the laccase VdtB is involved in dimerization of 2 semi-viriditoxin molecules to yield the final viriditoxin. The non-catalytic carboxylesterase-like protein VdtD affects the stereochemistical outcome of the coupling. The highly reducing polyketide synthase VdtX is not involved in viriditoxin synthesis, but might possibly play a role in the production of additional metabolites not identified yet. The chain is Highly reducing polyketide synthase VdtX from Byssochlamys spectabilis (Paecilomyces variotii).